Reading from the N-terminus, the 981-residue chain is Calsyntenin-1 (981 aa).

An N-terminal signal peptide occupies residues 1 to 28 (MLRRPAPALAPAARLLLAGLLCGGGVWA). The Extracellular portion of the chain corresponds to 29–859 (ARVNKHKPWL…PHPFAVVPST (831 aa)). Cadherin domains lie at 38–164 (LEPT…APVF) and 165–265 (KEKS…TPGW). Asn346, Asn366, and Asn515 each carry an N-linked (GlcNAc...) asparagine glycan. Residues 860–880 (ATVVIVVCVSFLVFMIILGVF) traverse the membrane as a helical segment. At 881 to 981 (RIRAAHRRTM…LEWDDSTLSY (101 aa)) the chain is on the cytoplasmic side. A disordered region spans residues 915-981 (METYEDQHSS…LEWDDSTLSY (67 aa)). Positions 925 to 960 (EEEEEEEEEEESEDGEEEDDITSAESESSEEEEGEQ) are enriched in acidic residues. The segment covering 962 to 981 (DPQNATRQQQLEWDDSTLSY) has biased composition (polar residues).

This sequence belongs to the calsyntenin family. In terms of assembly, directly interacts with APBA2. Forms a tripartite complex with APBA2 and APP. Interacts with KLC1. Interacts with APBB1; this interaction stabilizes AlcICD metabolism. As to quaternary structure, interacts with PSEN1. Proteolytically processed under normal cellular conditions. A primary zeta-cleavage generates a large extracellular (soluble) N-terminal domain (sAlc) and a short C-terminal transmembrane fragment (CTF1). A secondary cleavage catalyzed by presenilin gamma-secretase within the transmembrane domain releases the beta-Alc-alpha chain in the extracellular milieu and produces an intracellular fragment (AlcICD). This processing is strongly suppressed in the tripartite complex formed with APBA2 and APP, which seems to prevent the association with PSEN1. Expressed in the brain and, a lower level, in the heart, skeletal muscle, kidney and placenta. Accumulates in dystrophic neurites around the amyloid core of Alzheimer disease senile plaques (at protein level).

It localises to the postsynaptic cell membrane. Its subcellular location is the endoplasmic reticulum membrane. It is found in the golgi apparatus membrane. The protein resides in the cell projection. The protein localises to the neuron projection. It localises to the nucleus. Postsynaptic adhesion molecule that binds to presynaptic neurexins to mediate both excitatory and inhibitory synapse formation. Promotes synapse development by acting as a cell adhesion molecule at the postsynaptic membrane, which associates with neurexin-alpha at the presynaptic membrane. Also functions as a cargo in axonal anterograde transport by acting as a molecular adapter that promotes KLC1 association with vesicles. Complex formation with APBA2 and APP, stabilizes APP metabolism and enhances APBA2-mediated suppression of beta-APP40 secretion, due to the retardation of intracellular APP maturation. Its function is as follows. As intracellular fragment AlcICD, suppresses APBB1-dependent transactivation stimulated by APP C-terminal intracellular fragment (AICD), most probably by competing with AICD for APBB1-binding. In terms of biological role, in complex with APBA2 and C99, a C-terminal APP fragment, abolishes C99 interaction with PSEN1 and thus APP C99 cleavage by gamma-secretase, most probably through stabilization of the direct interaction between APBA2 and APP. The chain is Calsyntenin-1 from Homo sapiens (Human).